A 552-amino-acid polypeptide reads, in one-letter code: TBCC domain-containing protein 1 (552 aa).

A C-CAP/cofactor C-like domain is found at 304 to 435 (PRLHRIVVMS…LEDHMARTGL (132 aa)).

Belongs to the TBCC family. In terms of tissue distribution, expressed in brain and testis (at protein level).

The protein resides in the cytoplasm. It localises to the cytoskeleton. The protein localises to the microtubule organizing center. It is found in the centrosome. Its subcellular location is the spindle pole. In terms of biological role, plays a role in the regulation of centrosome and Golgi apparatus positioning, with consequences on cell shape and cell migration. The sequence is that of TBCC domain-containing protein 1 (Tbccd1) from Mus musculus (Mouse).